Reading from the N-terminus, the 71-residue chain is uncharacterized protein (71 aa).

Residues 1-71 (MLFETLKSLS…AFFSRPFYSE (71 aa)) are disordered. Positions 7 to 33 (KSLSQQNGGQFSDEQSFESPISSSFNG) are enriched in polar residues. The segment covering 35-65 (SMPFGSPSSTMSSSYKGNTNSSTKSSSAFFS) has biased composition (low complexity).

This is an uncharacterized protein from Dictyostelium discoideum (Social amoeba).